A 309-amino-acid polypeptide reads, in one-letter code: MTDAATAPTSIDLRAEYEGSGAKEVLEELDRELIGLKPVKDRIRETAALLLVERARQKLGLAHETPTLHMSFTGNPGTGKTTVALKMAGLLHRLGYVRKGHLVSVTRDDLVGQYIGHTAPKTKEVLKRAMGGVLFIDEAYYLYRPDNERDYGQEAIEILLQVMENNRDDLVVILAGYADRMENFFQSNPGFRSRIAHHIEFPDYSDEELFEIAGHMLDDQNYQMTPEAETALRAYIGLRRNQPHFANARSIRNALDRARLRQANRLFTASSGPLDARALSTMAEEDIRASRVFKGGLDSERRAAEALAR.

Residue 74–81 (GNPGTGKT) coordinates ATP.

Belongs to the CbxX/CfxQ family. In terms of assembly, forms homohexameric rings. The oligomeric transition is triggered by ribulose 1,5-biphosphate.

Its function is as follows. ATPase involved in the activation of red-type RuBisCo (ribulose-1,5-bisphosphate carboxylase/oxygenase), which tends to form inactive complexes with its substrate ribulose 1,5-bisphosphate (RuBP). Catalyzes the release of RuBP from inhibited RuBisCo in an ATP-dependent manner. Activation of RuBisCO involves the ATP-dependent carboxylation of the epsilon-amino group of lysine leading to a carbamate structure. This Cereibacter sphaeroides (Rhodobacter sphaeroides) protein is Protein CbbX (cbbX).